A 739-amino-acid chain; its full sequence is Malate synthase G (739 aa).

The span at 1 to 18 (MTEQELLSAQTADNAGTD) shows a compositional bias: polar residues. Residues 1-23 (MTEQELLSAQTADNAGTDSTERV) are disordered. Residues valine 135, 142 to 143 (RF), serine 292, and arginine 329 contribute to the acetyl-CoA site. Arginine 356 serves as the catalytic Proton acceptor. Glyoxylate-binding positions include arginine 356, glutamate 447, and 472–475 (GFLD). Mg(2+)-binding residues include glutamate 447 and aspartate 475. Proline 556 contributes to the acetyl-CoA binding site. A Cysteine sulfenic acid (-SOH) modification is found at cysteine 633. Residue aspartate 647 is the Proton donor of the active site.

The protein belongs to the malate synthase family. GlcB subfamily. Monomer. The cofactor is Mg(2+).

The protein localises to the cytoplasm. The enzyme catalyses glyoxylate + acetyl-CoA + H2O = (S)-malate + CoA + H(+). The protein operates within carbohydrate metabolism; glyoxylate cycle; (S)-malate from isocitrate: step 2/2. Its activity is regulated as follows. Inhibited by oxalate, glycolate and ATP. Involved in the glycolate utilization. Catalyzes the condensation and subsequent hydrolysis of acetyl-coenzyme A (acetyl-CoA) and glyoxylate to form malate and CoA. In Corynebacterium glutamicum (strain ATCC 13032 / DSM 20300 / JCM 1318 / BCRC 11384 / CCUG 27702 / LMG 3730 / NBRC 12168 / NCIMB 10025 / NRRL B-2784 / 534), this protein is Malate synthase G.